Here is a 157-residue protein sequence, read N- to C-terminus: Ribosome maturation factor RimP (157 aa).

Belongs to the RimP family.

It is found in the cytoplasm. Required for maturation of 30S ribosomal subunits. This is Ribosome maturation factor RimP from Enterococcus faecalis (strain ATCC 700802 / V583).